A 113-amino-acid polypeptide reads, in one-letter code: MSYLLVAIVCLLTSLGQLCQKQAAECWRRLPVAQRQRVTFGWLMLAALLLGIGLLLWLLVLQHLPLGVAYPLLSINFVLVTLLAHYGFGERVDRHHWWGIALIVIGIYLMQGE.

3 consecutive transmembrane segments (helical) span residues 40 to 60 (FGWL…WLLV), 64 to 84 (LPLG…TLLA), and 92 to 112 (VDRH…LMQG).

This sequence belongs to the ArnE family. Heterodimer of ArnE and ArnF.

The protein resides in the cell inner membrane. The protein operates within bacterial outer membrane biogenesis; lipopolysaccharide biosynthesis. Functionally, translocates 4-amino-4-deoxy-L-arabinose-phosphoundecaprenol (alpha-L-Ara4N-phosphoundecaprenol) from the cytoplasmic to the periplasmic side of the inner membrane. The sequence is that of Probable 4-amino-4-deoxy-L-arabinose-phosphoundecaprenol flippase subunit ArnE from Pectobacterium atrosepticum (strain SCRI 1043 / ATCC BAA-672) (Erwinia carotovora subsp. atroseptica).